Reading from the N-terminus, the 462-residue chain is Calcitonin gene-related peptide type 1 receptor (462 aa).

Positions Met-1 to Ala-22 are cleaved as a signal peptide. Residues Glu-23–Leu-140 lie on the Extracellular side of the membrane. 3 disulfide bridges follow: Cys-49–Cys-75, Cys-66–Cys-106, and Cys-89–Cys-128. 3 N-linked (GlcNAc...) asparagine glycosylation sites follow: Asn-67, Asn-119, and Asn-124. The helical transmembrane segment at Asn-141–Phe-165 threads the bilayer. Residues Tyr-166–Thr-176 are Cytoplasmic-facing. A helical membrane pass occupies residues Leu-177–Val-199. Topologically, residues Ala-200–Pro-210 are extracellular. A helical membrane pass occupies residues Val-211–His-239. Residues Thr-240–Leu-253 are Cytoplasmic-facing. Residues Met-254 to Ala-274 traverse the membrane as a helical segment. At Arg-275–His-290 the chain is on the extracellular side. The tract at residues Thr-289–His-290 is required for RAMP3 interaction. The chain crosses the membrane as a helical span at residues Leu-291–Arg-315. The Cytoplasmic portion of the chain corresponds to Val-316–Asn-330. The helical transmembrane segment at Leu-331–Leu-352 threads the bilayer. The Extracellular portion of the chain corresponds to Ile-353–Asp-367. The chain crosses the membrane as a helical span at residues Tyr-368–Phe-388. Residues Asn-389–Asp-462 lie on the Cytoplasmic side of the membrane. Residues Ser-421 and Ser-446 each carry the phosphoserine modification.

It belongs to the G-protein coupled receptor 2 family. In terms of assembly, heterodimer of CALCRL and RAMP1; the receptor complex functions as CGRP receptor. Heterodimer of CALCRL and RAMP2 or CALCRL and RAMP3; the complexes function as adrenomedullin receptor. In terms of tissue distribution, detected in lung and coronary artery.

The protein resides in the cell membrane. In terms of biological role, g protein-coupled receptor which specificity is determined by its interaction with receptor-activity-modifying proteins (RAMPs). Together with RAMP1, form the receptor complex for calcitonin-gene-related peptides CALCA/CGRP1 and CALCB/CGRP2. Together with RAMP2 or RAMP3, function as receptor complexes for adrenomedullin (ADM and ADM2). Ligand binding causes a conformation change that triggers signaling via guanine nucleotide-binding proteins (G proteins) and modulates the activity of downstream effectors. Activates cAMP-dependent pathway. This Sus scrofa (Pig) protein is Calcitonin gene-related peptide type 1 receptor (CALCRL).